The chain runs to 209 residues: Peroxynitrite isomerase 2 (209 aa).

The GXWXGXG signature appears at 56–62 (GVWRGEG). Heme b contacts are provided by Lys-172 and His-199.

The protein belongs to the nitrobindin family. In terms of assembly, homodimer. Heme b is required as a cofactor.

It carries out the reaction peroxynitrite = nitrate. It participates in nitrogen metabolism. Functionally, heme-binding protein able to scavenge peroxynitrite and to protect free L-tyrosine against peroxynitrite-mediated nitration, by acting as a peroxynitrite isomerase that converts peroxynitrite to nitrate. Therefore, this protein likely plays a role in peroxynitrite sensing and in the detoxification of reactive nitrogen and oxygen species (RNS and ROS, respectively). Is able to bind nitric oxide (NO) in vitro, but may act as a sensor of peroxynitrite levels in vivo. The protein is Peroxynitrite isomerase 2 of Mycolicibacterium gilvum (strain PYR-GCK) (Mycobacterium gilvum (strain PYR-GCK)).